The following is a 590-amino-acid chain: Aspartate--tRNA(Asp/Asn) ligase (590 aa).

Position 178 (Glu-178) interacts with L-aspartate. Residues 202–205 (QIYK) form an aspartate region. Arg-224 provides a ligand contact to L-aspartate. Residues 224–226 (RDE) and Gln-233 contribute to the ATP site. His-453 lines the L-aspartate pocket. Glu-487 lines the ATP pocket. Arg-494 serves as a coordination point for L-aspartate. 539–542 (GLDR) lines the ATP pocket.

This sequence belongs to the class-II aminoacyl-tRNA synthetase family. Type 1 subfamily. As to quaternary structure, homodimer.

The protein resides in the cytoplasm. It carries out the reaction tRNA(Asx) + L-aspartate + ATP = L-aspartyl-tRNA(Asx) + AMP + diphosphate. In terms of biological role, aspartyl-tRNA synthetase with relaxed tRNA specificity since it is able to aspartylate not only its cognate tRNA(Asp) but also tRNA(Asn). Reaction proceeds in two steps: L-aspartate is first activated by ATP to form Asp-AMP and then transferred to the acceptor end of tRNA(Asp/Asn). This chain is Aspartate--tRNA(Asp/Asn) ligase, found in Treponema denticola (strain ATCC 35405 / DSM 14222 / CIP 103919 / JCM 8153 / KCTC 15104).